We begin with the raw amino-acid sequence, 465 residues long: Argininosuccinate lyase (465 aa).

It belongs to the lyase 1 family. Argininosuccinate lyase subfamily.

It is found in the cytoplasm. The catalysed reaction is 2-(N(omega)-L-arginino)succinate = fumarate + L-arginine. It functions in the pathway amino-acid biosynthesis; L-arginine biosynthesis; L-arginine from L-ornithine and carbamoyl phosphate: step 3/3. The chain is Argininosuccinate lyase from Clostridium botulinum (strain Eklund 17B / Type B).